Consider the following 228-residue polypeptide: 2,3-bisphosphoglycerate-dependent phosphoglycerate mutase (228 aa).

Residues 8 to 15 (RHGQSEWN), 21 to 22 (TG), Arg-60, 87 to 90 (ERHY), Lys-98, 114 to 115 (RR), and 183 to 184 (GN) contribute to the substrate site. Residue His-9 is the Tele-phosphohistidine intermediate of the active site. Glu-87 (proton donor/acceptor) is an active-site residue.

It belongs to the phosphoglycerate mutase family. BPG-dependent PGAM subfamily.

The catalysed reaction is (2R)-2-phosphoglycerate = (2R)-3-phosphoglycerate. Its pathway is carbohydrate degradation; glycolysis; pyruvate from D-glyceraldehyde 3-phosphate: step 3/5. In terms of biological role, catalyzes the interconversion of 2-phosphoglycerate and 3-phosphoglycerate. The polypeptide is 2,3-bisphosphoglycerate-dependent phosphoglycerate mutase (Staphylococcus haemolyticus (strain JCSC1435)).